A 717-amino-acid polypeptide reads, in one-letter code: Copine family protein 5 (717 aa).

A C2 domain is found at 193 to 318 (YLGGIIVSAE…KYGPGSDNVY (126 aa)). Residues 377 to 567 (ELDQRRFDGE…LNKSRIAETA (191 aa)) form the VWFA domain.

Belongs to the copine family.

The chain is Copine family protein 5 (cpna-5) from Caenorhabditis elegans.